We begin with the raw amino-acid sequence, 486 residues long: Cardiolipin synthase A (486 aa).

2 helical membrane passes run 3-23 (TVYTLVSWLAILGYWLLIAGV) and 38-58 (MAWLLIIYILPLVGIIAYLAV). PLD phosphodiesterase domains lie at 219 to 246 (MDLRQHRKMIMIDNYIAYTGSMNMVDPR) and 399 to 426 (EGGLLHTKSVLVDGELSLVGTVNLDMRS). Residues His224, Lys226, Asp231, His404, Lys406, and Asp411 contribute to the active site.

It belongs to the phospholipase D family. Cardiolipin synthase subfamily. ClsA sub-subfamily.

It localises to the cell inner membrane. The catalysed reaction is 2 a 1,2-diacyl-sn-glycero-3-phospho-(1'-sn-glycerol) = a cardiolipin + glycerol. In terms of biological role, catalyzes the reversible phosphatidyl group transfer from one phosphatidylglycerol molecule to another to form cardiolipin (CL) (diphosphatidylglycerol) and glycerol. In Shigella flexneri, this protein is Cardiolipin synthase A.